The chain runs to 71 residues: Biotinylated protein TB7.3 homolog (71 aa).

The 70-residue stretch at 2–71 (AEDVRAEIVA…QAGDLIAVIS (70 aa)) folds into the Biotinyl-binding domain. Lys-37 carries the post-translational modification N6-biotinyllysine.

The sequence is that of Biotinylated protein TB7.3 homolog from Mycobacterium leprae (strain TN).